The primary structure comprises 593 residues: Tyrosine-protein phosphatase non-receptor type 11 (593 aa).

Thr-2 carries the post-translational modification N-acetylthreonine. 2 SH2 domains span residues 6 to 102 (WFHP…KYPL) and 112 to 216 (WFHG…KQPL). Residues Tyr-62 and Tyr-66 each carry the phosphotyrosine modification. The Tyrosine-protein phosphatase domain occupies 247–517 (FWEEFETLQQ…EAQYRFIYMA (271 aa)). Substrate contacts are provided by residues Asp-425, 459–465 (CSAGIGR), and Gln-506. Cys-459 acts as the Phosphocysteine intermediate in catalysis. Tyr-542 and Tyr-580 each carry phosphotyrosine; by PDGFR.

Belongs to the protein-tyrosine phosphatase family. Non-receptor class 2 subfamily. As to quaternary structure, interacts with phosphorylated SIT1, LIME1, BCAR3 and MZPL1. Interacts with FCRL4, FCRL6, ANKHD1, SHB, INPP5D/SHIP1 and CD84. Interacts with MILR1 (tyrosine-phosphorylated). Interacts with FLT1 (tyrosine-phosphorylated), FLT3 (tyrosine-phosphorylated), FLT4 (tyrosine-phosphorylated), KIT and GRB2. Interacts with PTPNS1. Interacts with KIR2DL1; the interaction is enhanced by ARRB2. Interacts (via SH2 domain) with TEK/TIE2 (tyrosine phosphorylated). Interacts with GAB2. Interacts with TERT; the interaction retains TERT in the nucleus. Interacts with PECAM1 and FER. Interacts with EPHA2 (activated); participates in PTK2/FAK1 dephosphorylation in EPHA2 downstream signaling. Interacts with PDGFRA (tyrosine phosphorylated). Interacts with PDGFRB (tyrosine phosphorylated); this interaction increases the PTPN11 phosphatase activity. Interacts with ROS1; this mediates PTPN11 phosphorylation. Interacts with CEACAM1 (via cytoplasmic domain); this interaction depends on the monomer/dimer equilibrium and is phosphorylation-dependent. Interacts with MPIG6B (via ITIM motif). Interacts with SIGLEC10. Interacts with CLEC12B (via ITIM motif); this interaction triggers dephosphorylation and activation of PTPN11. Interacts (via SH2 domains) with NEDD9/CAS-L; the interaction is enhanced when NEDD9/CAS-L is tyrosine phosphorylated. Phosphorylated on Tyr-542 and Tyr-580 upon receptor protein tyrosine kinase activation; which creates a binding site for GRB2 and other SH2-containing proteins. Phosphorylated upon activation of the receptor-type kinase FLT3. Phosphorylated upon activation of the receptor-type kinase PDGFRA. Phosphorylated by activated PDGFRB. In terms of tissue distribution, expressed in brain, muscle and lung.

It is found in the cytoplasm. The enzyme catalyses O-phospho-L-tyrosyl-[protein] + H2O = L-tyrosyl-[protein] + phosphate. With respect to regulation, inhibited by orthovanadate, molybdate and spermidine. Acts downstream of various receptor and cytoplasmic protein tyrosine kinases to participate in the signal transduction from the cell surface to the nucleus. Positively regulates MAPK signal transduction pathway. Dephosphorylates GAB1, ARHGAP35 and EGFR. Dephosphorylates ROCK2 at 'Tyr-722' resulting in stimulation of its RhoA binding activity. Dephosphorylates CDC73. Dephosphorylates SOX9 on tyrosine residues, leading to inactivate SOX9 and promote ossification. Dephosphorylates tyrosine-phosphorylated NEDD9/CAS-L. This is Tyrosine-protein phosphatase non-receptor type 11 (Ptpn11) from Rattus norvegicus (Rat).